Reading from the N-terminus, the 398-residue chain is Succinate--CoA ligase [ADP-forming] subunit beta (398 aa).

One can recognise an ATP-grasp domain in the interval 9-254 (KALLKSYGAP…TTEEDDKEIE (246 aa)). ATP contacts are provided by residues Lys-46, 53-55 (GRG), Glu-109, Ala-112, and Glu-117. Positions 209 and 223 each coordinate Mg(2+). Substrate is bound by residues Asn-274 and 331 to 333 (GIM).

It belongs to the succinate/malate CoA ligase beta subunit family. In terms of assembly, heterotetramer of two alpha and two beta subunits. Mg(2+) is required as a cofactor.

The enzyme catalyses succinate + ATP + CoA = succinyl-CoA + ADP + phosphate. It catalyses the reaction GTP + succinate + CoA = succinyl-CoA + GDP + phosphate. It participates in carbohydrate metabolism; tricarboxylic acid cycle; succinate from succinyl-CoA (ligase route): step 1/1. Its function is as follows. Succinyl-CoA synthetase functions in the citric acid cycle (TCA), coupling the hydrolysis of succinyl-CoA to the synthesis of either ATP or GTP and thus represents the only step of substrate-level phosphorylation in the TCA. The beta subunit provides nucleotide specificity of the enzyme and binds the substrate succinate, while the binding sites for coenzyme A and phosphate are found in the alpha subunit. The polypeptide is Succinate--CoA ligase [ADP-forming] subunit beta (Rhizobium meliloti (strain 1021) (Ensifer meliloti)).